Consider the following 203-residue polypeptide: Mitotic spindle checkpoint component mad2 (203 aa).

The 185-residue stretch at 13-197 (KGSSKLVSEF…TSMHKIDCQV (185 aa)) folds into the HORMA domain.

It belongs to the MAD2 family. Interacts with mad3 and slp1.

The protein localises to the nucleus. Its function is as follows. Feedback control that prevents cells with incompletely assembled spindles from leaving mitosis. It interacts with the anaphase promoting complex/cyclosome (APC/C) thereby inhibiting APC/C-dependent proteolysis, a step required for exit from mitosis. This Schizosaccharomyces pombe (strain 972 / ATCC 24843) (Fission yeast) protein is Mitotic spindle checkpoint component mad2.